The following is a 687-amino-acid chain: Fimbrin-5 (687 aa).

An EF-hand domain is found at 7-74 (VLVSDPWLQS…KSVLDKSYPN (68 aa)). Calponin-homology (CH) domains follow at residues 122-239 (ESEK…KIQM), 267-370 (LAPE…QHRN), 392-498 (SREE…RYTM), and 513-621 (EITD…YWSL). Actin-binding regions lie at residues 122–370 (ESEK…QHRN) and 392–621 (SREE…YWSL). Residues 628 to 687 (ESTVSEDATDDGDANSVAGEISNLSIDGASESSPTVQDQELLTKADNDEDEVDGENNKDA) are disordered. Polar residues predominate over residues 649–667 (SNLSIDGASESSPTVQDQE).

Interacts with F-actin. Expressed in mature pollen.

The protein resides in the cytoplasm. The protein localises to the cytoskeleton. Cross-links actin filaments (F-actin) in a calcium independent manner. Induces the formation of actin bundles. Stabilizes and prevents F-actin depolymerization mediated by latrunculin B (LatB). In Arabidopsis thaliana (Mouse-ear cress), this protein is Fimbrin-5.